The sequence spans 660 residues: Phosphatidylinositol-3-phosphate phosphatase MTMR7 (660 aa).

One can recognise a Myotubularin phosphatase domain in the interval 126 to 504 (GWVLIDLSEE…FMYKFWSGMY (379 aa)). The a 1,2-diacyl-sn-glycero-3-phospho-(1D-myo-inositol-3-phosphate) site is built by asparagine 250, asparagine 275, and isoleucine 276. The active-site Phosphocysteine intermediate is the cysteine 338. A 1,2-diacyl-sn-glycero-3-phospho-(1D-myo-inositol-3-phosphate) is bound by residues serine 339, aspartate 340, glycine 341, tryptophan 342, aspartate 343, arginine 344, and arginine 384. Positions 521 to 551 (LMAVKEETQQLEEELEALEERLEKIQKVQLN) form a coiled coil. Residues 554–660 (KVKSKQSEPS…DSDEAVFLTA (107 aa)) are disordered. Over residues 566–596 (SGFSTSDNSIANTPQDYSGNMKSFPSRSPSQ) the composition is skewed to polar residues. Threonine 578 carries the post-translational modification Phosphothreonine. The segment covering 641 to 653 (APSEDSGKDRDSD) has biased composition (basic and acidic residues).

Belongs to the protein-tyrosine phosphatase family. Non-receptor class myotubularin subfamily. As to quaternary structure, heterodimer (via C-terminus) with MTMR9 (via coiled coil domain); the interaction enhances MTMR7 catalytic activity. Does not homodimerize. Interacts with RAB1B (in GDP-bound form). As to expression, expressed specifically in brain.

Its subcellular location is the cytoplasm. The protein localises to the endomembrane system. It catalyses the reaction a 1,2-diacyl-sn-glycero-3-phospho-(1D-myo-inositol-3-phosphate) + H2O = a 1,2-diacyl-sn-glycero-3-phospho-(1D-myo-inositol) + phosphate. The catalysed reaction is 1D-myo-inositol 1,3-bisphosphate + H2O = 1D-myo-inositol 1-phosphate + phosphate. Interaction with MTMR9 increases phosphatase activity. Lipid phosphatase that specifically dephosphorylates the D-3 position of phosphatidylinositol 3-phosphate (PtdIns(3)P) and inositol 1,3-bisphosphate (Ins(1,3)P2). In Homo sapiens (Human), this protein is Phosphatidylinositol-3-phosphate phosphatase MTMR7.